The chain runs to 278 residues: Large ribosomal subunit protein uL2 (278 aa).

The segment covering 210-219 (RKRWLGKRPQ) has biased composition (basic residues). Residues 210-278 (RKRWLGKRPQ…LIIRHRKGSK (69 aa)) form a disordered region. Residues 258–270 (KTRDVKKASEKLI) are compositionally biased toward basic and acidic residues.

It belongs to the universal ribosomal protein uL2 family. In terms of assembly, part of the 50S ribosomal subunit. Forms a bridge to the 30S subunit in the 70S ribosome.

In terms of biological role, one of the primary rRNA binding proteins. Required for association of the 30S and 50S subunits to form the 70S ribosome, for tRNA binding and peptide bond formation. It has been suggested to have peptidyltransferase activity; this is somewhat controversial. Makes several contacts with the 16S rRNA in the 70S ribosome. In Lactobacillus acidophilus (strain ATCC 700396 / NCK56 / N2 / NCFM), this protein is Large ribosomal subunit protein uL2.